A 522-amino-acid polypeptide reads, in one-letter code: U4/U6 small nuclear ribonucleoprotein Prp4 (522 aa).

Polar residues predominate over residues 1 to 13 (MASSRASSTQATK). Residues 1–20 (MASSRASSTQATKTKAPDDL) are disordered. An N6-acetyllysine modification is found at Lys27. 7 WD repeats span residues 229–268 (GDDRPISYCHFSPNSKMLATACWSGLCKLWSVPDCNLLHT), 271–318 (GHNT…PVAD), 321–360 (GHTVRVARVMWHPSGRFLGTTCYDRSWRLWDLEAQEEILH), 363–402 (GHSMGVYDIAFHQDGSLAGTGGLDAFGRVWDLRTGRCIMF), 405–444 (GHLKEIYGINFSPNGYHIATGSGDNTCKVWDLRQRRCVYT), 447–487 (AHQN…PLKT), and 490–521 (GHEGKVMGLDISSDGQLIATCSYDRTFKLWMA).

In terms of assembly, component of the precatalytic spliceosome (spliceosome B complex). Component of the U4/U6-U5 tri-snRNP complex, a building block of the precatalytic spliceosome (spliceosome B complex). The U4/U6-U5 tri-snRNP complex is composed of the U4, U6 and U5 snRNAs and at least PRPF3, PRPF4, PRPF6, PRPF8, PRPF31, SNRNP200, TXNL4A, SNRNP40, SNRPB, SNRPD1, SNRPD2, SNRPD3, SNRPE, SNRPF, SNRPG, DDX23, CD2BP2, PPIH, SNU13, EFTUD2, SART1 and USP39, plus LSM2, LSM3, LSM4, LSM5, LSM6, LSM7 and LSM8. Interacts directly with PRPF18, PPIH and PRPF3. Part of a heteromeric complex containing PPIH, PRPF3 and PRPF4 that is stable in the absence of RNA. Interacts with ERCC6.

The protein localises to the nucleus. It is found in the nucleus speckle. In terms of biological role, plays a role in pre-mRNA splicing as component of the U4/U6-U5 tri-snRNP complex that is involved in spliceosome assembly, and as component of the precatalytic spliceosome (spliceosome B complex). This is U4/U6 small nuclear ribonucleoprotein Prp4 (PRPF4) from Homo sapiens (Human).